Here is a 235-residue protein sequence, read N- to C-terminus: MKKINIIKIVFIITVILISTISPIIKSDSKKDISNVKSDLLYAYTITPYDYKDCRVNFSTTHTLNIDTQKYRGKDYYISSEMSYEASQKFKRDDHVDVFGLFYILNSHTGEYIYGGITPAQNNKVNHKLLGNLFISGESQQNLNNKIILEKDIVTFQEIDFKIRKYLMDNYKIYDATSPYVSGRIEIGTKDGKHEQIDLFDSPNEGTRSDIFAKYKDNRIINMKNFSHFDIYLEK.

Positions 1–27 (MKKINIIKIVFIITVILISTISPIIKS) are cleaved as a signal peptide. The Zn(2+) site is built by His194, His228, and Asp230.

This sequence belongs to the staphylococcal/streptococcal toxin family.

In terms of biological role, superantigen that acts as a causative agent of the symptoms associated with scarlet fever. Has been associated with streptococcal toxic shock-like disease and may play a role in the early events of rheumatic fever. Superantigens cross-link major histocompatibility complex (MHC) class II and T-cell receptor (TCR) molecules, resulting in an overstimulation of T-cells associated with a massive release of pyrogenic and inflammatory cytokines. This chain is Exotoxin type C, found in Streptococcus pyogenes serotype M18 (strain MGAS8232).